The primary structure comprises 893 residues: Dystroglycan 1 (893 aa).

An N-terminal signal peptide occupies residues 1–27; that stretch reads MSVDNWLLHPLWGQTFLLLLSVAVAQA. Residues 28 to 406 are required for laminin recognition; sequence HWPSEPSEAV…GQIRPTLTIP (379 aa). Positions 47-69 are O-glycosylated at one site; that stretch reads SMHSVLSDFQEAVPTVVGIPDGT. Asn139 carries an N-linked (GlcNAc...) asparagine glycan. A disulfide bridge links Cys180 with Cys262. Positions 314-483 are mucin-like domain; sequence ATPTPVTAIG…PPTRIRTTTS (170 aa). Residues Thr315, Thr317, and Thr377 are each glycosylated (O-linked (Man6P...) threonine). A disordered region spans residues 379-498; sequence TLGPIQPTRV…GEPNQRPELK (120 aa). Low complexity predominate over residues 409–445; the sequence is VEPTAVITPPTTTTKKPRVSTPKPATPSTDSSTTTTR. Residues 461-483 are O-glycosylated at seven sites with GalNAc; it reads TTKAPITRLETASPPTRIRTTTS. The region spanning 601–710 is the Peptidase S72 domain; sequence KAPARFKARL…LSIAVTGSGS (110 aa). Residues Asn639, Asn647, and Asn659 are each glycosylated (N-linked (GlcNAc...) asparagine). At 652 to 751 the chain is on the extracellular side; sequence SIVVEWTNNT…SSEDDVYLHT (100 aa). Residues Cys667 and Cys711 are joined by a disulfide bond. A disordered region spans residues 722–744; that stretch reads PSPGSSAAPATEVPDRDPEKSSE. The segment covering 734 to 744 has biased composition (basic and acidic residues); that stretch reads VPDRDPEKSSE. A helical transmembrane segment spans residues 752–772; it reads VIPAVVVAAILLIAGIIAMIC. The Cytoplasmic segment spans residues 773-893; sequence YRKKRKGKLT…YRSPPPYVPP (121 aa). Residues 774-780 carry the Nuclear localization signal motif; it reads RKKRKGK. Thr788 bears the Phosphothreonine mark. Positions 817 to 893 are required for interaction with CAV3; sequence LQEEKAPLPP…YRSPPPYVPP (77 aa). Positions 821–893 are disordered; the sequence is KAPLPPPEYP…YRSPPPYVPP (73 aa). A compositionally biased stretch (polar residues) spans 830-844; that stretch reads PNQSMPETTPLNQDT. Residues 857 to 868 show a composition bias toward pro residues; that stretch reads NAPPYQPPPPFT. The required for binding DMD and UTRN stretch occupies residues 878 to 893; sequence PKNMTPYRSPPPYVPP. A PPXY motif motif is present at residues 887-890; it reads PPPY. Tyr890 is modified (phosphotyrosine; by SRC).

Monomer. Heterodimer of alpha- and beta-dystroglycan subunits which are the central components of the dystrophin-glycoprotein complex. This complex then can form a dystrophin-associated glycoprotein complex (DGC) which is composed of three subcomplexes: a cytoplasmic complex comprised of DMD (or UTRN), DTNA and a number of syntrophins, such as SNTB1, SNTB2, SNTG1 and SNTG2, the transmembrane dystroglycan complex, and the sarcoglycan-sarcospan complex. Interacts (via the N-terminal of alphaDAG1) with LARGE1; the interaction enhances laminin binding. Interacts with SGCD. Interacts with AGR2 and AGR3. Interacts (betaDAG1) with DMD; the interaction is inhibited by phosphorylation on the PPXY motif. Interacts (betaDAG1, via its PPXY motif) with UTRN (via its WWW and ZZ domains); the interaction is inhibited by phosphorylation on the PPXY motif. Interacts (betaDAG1, via its phosphorylated PPXY motif) with the SH2 domain-containing proteins, FYN, CSK, NCK and SHC. Interacts (betaDAG1) with CAV3 (via a central WW-like domain); the interaction disrupts the binding of DMD. BetaDAG1 directly interacts with ANK3, but not with ANK2; this interaction does not interfere with DMD-binding and is required for retention at costameres. Identified in a dystroglycan complex that contains at least PRX, DRP2, UTRN, DMD and DAG1. Interacts with POMGNT1. BetaDAG1 interacts with CD93. Post-translationally, O-glycosylated. POMGNT1 catalyzes the initial addition of N-acetylglucosamine, giving rise to the GlcNAc(beta1-2)Man(alpha1-)O-Ser/Thr moiety and thus providing the necessary basis for the addition of further carbohydrate moieties. Heavily O-glycosylated comprising of up to two thirds of its mass and the carbohydrate composition differs depending on tissue type. Mucin-type O-glycosylation is important for ligand binding activity. O-mannosylation is found in high abundance in both brain and muscle where the most abundant glycan is Sia-alpha-2-3-Gal-beta-1-4-Glc-NAc-beta-1-2-Man. In muscle, glycosylation on Thr-315, Thr-317, Thr-379 by a phosphorylated O-mannosyl glycan with the structure 2-(N-acetylamido)-2-deoxygalactosyl-beta-1,3-2-(N-acetylamido)-2-deoxyglucosyl-beta-1,4-6-phosphomannose is mediated by like-acetylglucosaminyltransferase (LARGE1) protein amd is required for laminin binding. O-glycosylated in the N-terminal region with a core 1 or possibly core 8 glycan. The brain form displays a unique glycosylation pattern which is absent in other tissues; this form shows enhanced binding to laminin LAMA5 compared to the skeletal muscle form. N-glycosylated. In terms of processing, autolytic cleavage produces the alpha and beta subunits. In cutaneous cells, as well as in certain pathological conditions, shedding of beta-dystroglycan can occur releasing a peptide of about 30 kDa. Post-translationally, SRC-mediated phosphorylation of the PPXY motif of the beta subunit recruits SH2 domain-containing proteins, but inhibits binding to WWW domain-containing proteins, DMD and UTRN. This phosphorylation also inhibits nuclear entry. In terms of tissue distribution, detected in brain and kidney (at protein level). Detected in sciatic nerve (at protein level). Expressed in neurons and muscle cells (at protein level). Expressed in a variety of tissues. In brain, expressed in the hippocampal formation, the olfactory bulb, the cerebellum and the thalamus. In the peripheral nerve system, expressed in Schwann cells.

It is found in the secreted. The protein resides in the extracellular space. Its subcellular location is the cell membrane. It localises to the cytoplasm. The protein localises to the cytoskeleton. It is found in the nucleus. The protein resides in the nucleoplasm. Its subcellular location is the sarcolemma. It localises to the postsynaptic cell membrane. The dystroglycan complex is involved in a number of processes including laminin and basement membrane assembly, sarcolemmal stability, cell survival, peripheral nerve myelination, nodal structure, cell migration, and epithelial polarization. Functionally, extracellular peripheral glycoprotein that acts as a receptor for extracellular matrix proteins containing laminin-G domains, and for certain adenoviruses. Receptor for laminin-2 (LAMA2) and agrin in peripheral nerve Schwann cells. Also acts as a receptor for laminin LAMA5. Its function is as follows. Transmembrane protein that plays important roles in connecting the extracellular matrix to the cytoskeleton. Acts as a cell adhesion receptor in both muscle and non-muscle tissues. Receptor for both DMD and UTRN and, through these interactions, scaffolds axin to the cytoskeleton. Also functions in cell adhesion-mediated signaling and implicated in cell polarity. The protein is Dystroglycan 1 of Mus musculus (Mouse).